The chain runs to 576 residues: Protein NRT1/ PTR FAMILY 2.12 (576 aa).

Transmembrane regions (helical) follow at residues 58–78 (FNVYYLWMGLTNFAPLLGALI), 89–109 (IAYASLFSILGLMTVTLTACL), 130–150 (KLQLGILFLGLGFLSIGSGGI), 176–196 (FFNWYYLTLTMVLIFSHTVVV), 203–223 (WVIGFSIPTSLMACAVVLFFV), 329–349 (VWSAGIISIVAMTTQATFMVF), 364–384 (IPAASITVISYITIGIWVPIY), 406–426 (MGIGIVFAILSMFTAGFVEGV), 441–461 (WLALPLILMGLCESFNFIGLI), 475–495 (IANSLFPLSFAAANYLSSLLV), and 522–542 (YFYYLIAVLGVVNLVYFWYCA).

The protein belongs to the major facilitator superfamily. Proton-dependent oligopeptide transporter (POT/PTR) (TC 2.A.17) family. In terms of tissue distribution, expressed in flowers and siliques. Expressed in vascular bundle of the siliques and in funiculus.

Its subcellular location is the cell membrane. Functionally, low-affinity proton-dependent nitrate transporter. Not involved in dipeptides transport. Involved in delivering nitrate for seed development. This is Protein NRT1/ PTR FAMILY 2.12 (NPF2.12) from Arabidopsis thaliana (Mouse-ear cress).